Here is a 120-residue protein sequence, read N- to C-terminus: MTRIKRGSIARARRTKIRFFASKFRGSHSRLTRSIIQQGIRAFVSSQRDRDKKKRDFRRLWITRLNAAIRAIGVGYSYSASIHNLYKSQLILNRKILTQIAILNRNCLYMISNEILKSGV.

The protein belongs to the bacterial ribosomal protein bL20 family.

It is found in the plastid. Binds directly to 23S ribosomal RNA and is necessary for the in vitro assembly process of the 50S ribosomal subunit. It is not involved in the protein synthesizing functions of that subunit. The chain is Large ribosomal subunit protein bL20c from Cuscuta obtusiflora (Peruvian dodder).